We begin with the raw amino-acid sequence, 80 residues long: Cell division activator CedA (80 aa).

It belongs to the CedA family.

Its function is as follows. Activates the cell division inhibited by chromosomal DNA over-replication. The polypeptide is Cell division activator CedA (Salmonella choleraesuis (strain SC-B67)).